The sequence spans 151 residues: Large ribosomal subunit protein uL13 (151 aa).

This sequence belongs to the universal ribosomal protein uL13 family. In terms of assembly, part of the 50S ribosomal subunit.

Functionally, this protein is one of the early assembly proteins of the 50S ribosomal subunit, although it is not seen to bind rRNA by itself. It is important during the early stages of 50S assembly. This is Large ribosomal subunit protein uL13 from Synechococcus sp. (strain JA-3-3Ab) (Cyanobacteria bacterium Yellowstone A-Prime).